Consider the following 178-residue polypeptide: Cell division protein ZapC (178 aa).

Belongs to the ZapC family. As to quaternary structure, interacts directly with FtsZ.

The protein localises to the cytoplasm. In terms of biological role, contributes to the efficiency of the cell division process by stabilizing the polymeric form of the cell division protein FtsZ. Acts by promoting interactions between FtsZ protofilaments and suppressing the GTPase activity of FtsZ. The protein is Cell division protein ZapC of Pseudoalteromonas atlantica (strain T6c / ATCC BAA-1087).